Consider the following 108-residue polypeptide: Nucleoid-associated protein BQ02190 (108 aa).

Belongs to the YbaB/EbfC family. In terms of assembly, homodimer.

The protein localises to the cytoplasm. It localises to the nucleoid. Its function is as follows. Binds to DNA and alters its conformation. May be involved in regulation of gene expression, nucleoid organization and DNA protection. This is Nucleoid-associated protein BQ02190 from Bartonella quintana (strain Toulouse) (Rochalimaea quintana).